The following is a 1490-amino-acid chain: ABC transporter CDR4 (1490 aa).

The span at 1 to 12 (MADADTSSNSSK) shows a compositional bias: polar residues. Disordered stretches follow at residues 1–26 (MADA…GTYQ) and 53–75 (LKRQ…LSGK). Over 1 to 516 (MADADTSSNS…NILRIKGNPS (516 aa)) the chain is Cytoplasmic. The span at 58–67 (SRQESQKSNE) shows a compositional bias: basic and acidic residues. The ABC transporter 1 domain maps to 151–407 (PKYLSLFFRE…FIDMGYECPQ (257 aa)). Transmembrane regions (helical) follow at residues 517-537 (IHLF…SIFY), 551-571 (AALF…IFSL), 601-621 (LPTK…MVNF), 626-646 (GNFF…SHIF), 659-679 (AMTP…FVIP), and 767-787 (FGIV…LCEI). Residues 788 to 1182 (NKGAMQKGEI…VFEQNWRTPS (395 aa)) are Cytoplasmic-facing. The ABC transporter 2 domain maps to 846–1090 (FFWRDLTYQV…LINYFEKYGA (245 aa)). Residue 882 to 889 (GASGAGKT) participates in ATP binding. 3 consecutive transmembrane segments (helical) span residues 1183 to 1203 (YLYS…FSFY), 1217 to 1237 (FSVF…LPTF), and 1268 to 1288 (IPWN…PVGL). Asn1291 carries an N-linked (GlcNAc...) asparagine glycan. The next 3 helical transmembrane spans lie at 1304–1324 (FMWF…QLCI), 1333–1353 (AANL…VLVT), and 1370–1390 (FTYL…VTCA). Asn1424 carries an N-linked (GlcNAc...) asparagine glycan. Residues 1455–1475 (IGIYIAFIGINIIGTFILYWF) traverse the membrane as a helical segment.

The protein belongs to the ABC transporter superfamily. ABCG family. PDR (TC 3.A.1.205) subfamily.

The protein resides in the membrane. The protein is ABC transporter CDR4 (CDR4) of Candida albicans (Yeast).